A 520-amino-acid chain; its full sequence is Alkaline nuclease (520 aa).

This sequence belongs to the herpesviridae alkaline nuclease family. In terms of assembly, interacts with major DNA-binding protein; this interaction increases the nuclease processivity of the alkaline exonuclease.

The protein localises to the host nucleus. Its subcellular location is the host cytoplasm. Functionally, plays a role in processing non linear or branched viral DNA intermediates in order to promote the production of mature packaged unit-length linear progeny viral DNA molecules. Exhibits endonuclease and exonuclease activities and accepts both double-stranded and single-stranded DNA as substrate. Exonuclease digestion of DNA is in the 5'-&gt; 3' direction and the products are 5'-monophosphate nucleosides. Additionally, forms a recombinase with the major DNA-binding protein, which displays strand exchange activity. This Psittacid herpesvirus 1 (isolate Amazon parrot/-/97-0001/1997) (PsHV-1) protein is Alkaline nuclease (UL12).